We begin with the raw amino-acid sequence, 380 residues long: Cytochrome b (380 aa).

A run of 4 helical transmembrane segments spans residues F34–M54, W78–I99, W114–L134, and L179–T199. The heme b site is built by H84 and H98. Heme b is bound by residues H183 and H197. H202 contacts a ubiquinone. Transmembrane regions (helical) follow at residues I227–A247, L289–H309, L321–S341, and F348–P368.

This sequence belongs to the cytochrome b family. As to quaternary structure, the cytochrome bc1 complex contains 11 subunits: 3 respiratory subunits (MT-CYB, CYC1 and UQCRFS1), 2 core proteins (UQCRC1 and UQCRC2) and 6 low-molecular weight proteins (UQCRH/QCR6, UQCRB/QCR7, UQCRQ/QCR8, UQCR10/QCR9, UQCR11/QCR10 and a cleavage product of UQCRFS1). This cytochrome bc1 complex then forms a dimer. It depends on heme b as a cofactor.

It localises to the mitochondrion inner membrane. Component of the ubiquinol-cytochrome c reductase complex (complex III or cytochrome b-c1 complex) that is part of the mitochondrial respiratory chain. The b-c1 complex mediates electron transfer from ubiquinol to cytochrome c. Contributes to the generation of a proton gradient across the mitochondrial membrane that is then used for ATP synthesis. The protein is Cytochrome b (MT-CYB) of Aphelocoma coerulescens (Florida scrub-jay).